We begin with the raw amino-acid sequence, 201 residues long: Recombination protein RecR (201 aa).

The segment at 57–72 (CSDCRTFTEQDVCAIC) adopts a C4-type zinc-finger fold. Positions 81-176 (GQICVVESPA…MASRIAHGVP (96 aa)) constitute a Toprim domain.

The protein belongs to the RecR family.

In terms of biological role, may play a role in DNA repair. It seems to be involved in an RecBC-independent recombinational process of DNA repair. It may act with RecF and RecO. This chain is Recombination protein RecR, found in Pectobacterium carotovorum subsp. carotovorum (strain PC1).